Reading from the N-terminus, the 400-residue chain is Acetate kinase (400 aa).

N10 is a binding site for Mg(2+). An ATP-binding site is contributed by K17. R91 is a binding site for substrate. D150 functions as the Proton donor/acceptor in the catalytic mechanism. ATP-binding positions include 210–214 (HLGNG), 285–287 (DCR), and 333–337 (GIGEN). E387 contacts Mg(2+).

It belongs to the acetokinase family. Homodimer. It depends on Mg(2+) as a cofactor. Requires Mn(2+) as cofactor.

Its subcellular location is the cytoplasm. The enzyme catalyses acetate + ATP = acetyl phosphate + ADP. The protein operates within metabolic intermediate biosynthesis; acetyl-CoA biosynthesis; acetyl-CoA from acetate: step 1/2. Catalyzes the formation of acetyl phosphate from acetate and ATP. Can also catalyze the reverse reaction. In Photorhabdus laumondii subsp. laumondii (strain DSM 15139 / CIP 105565 / TT01) (Photorhabdus luminescens subsp. laumondii), this protein is Acetate kinase.